Reading from the N-terminus, the 831-residue chain is Valine--tRNA ligase (831 aa).

The short motif at 77-87 (PFTSGELHMGH) is the 'HIGH' region element. The 'KMSKS' region signature appears at 564–568 (RMSKS). Lysine 567 serves as a coordination point for ATP.

The protein belongs to the class-I aminoacyl-tRNA synthetase family. ValS type 2 subfamily.

The protein resides in the cytoplasm. The enzyme catalyses tRNA(Val) + L-valine + ATP = L-valyl-tRNA(Val) + AMP + diphosphate. Catalyzes the attachment of valine to tRNA(Val). As ValRS can inadvertently accommodate and process structurally similar amino acids such as threonine, to avoid such errors, it has a 'posttransfer' editing activity that hydrolyzes mischarged Thr-tRNA(Val) in a tRNA-dependent manner. The chain is Valine--tRNA ligase from Sulfolobus acidocaldarius (strain ATCC 33909 / DSM 639 / JCM 8929 / NBRC 15157 / NCIMB 11770).